A 177-amino-acid polypeptide reads, in one-letter code: Large ribosomal subunit protein uL6 (177 aa).

The protein belongs to the universal ribosomal protein uL6 family. Part of the 50S ribosomal subunit.

In terms of biological role, this protein binds to the 23S rRNA, and is important in its secondary structure. It is located near the subunit interface in the base of the L7/L12 stalk, and near the tRNA binding site of the peptidyltransferase center. The polypeptide is Large ribosomal subunit protein uL6 (Rhizobium rhizogenes (strain K84 / ATCC BAA-868) (Agrobacterium radiobacter)).